Consider the following 347-residue polypeptide: GMP reductase (347 aa).

108 to 131 (ADFEKTVQILALNPALNFVCIDVA) contributes to the NADP(+) binding site. The K(+) site is built by glycine 181 and glycine 183. Cysteine 186 functions as the Thioimidate intermediate in the catalytic mechanism. 216–239 (IVSDGGCTMPGDVAKAFGGGADFV) contributes to the NADP(+) binding site.

The protein belongs to the IMPDH/GMPR family. GuaC type 1 subfamily. As to quaternary structure, homotetramer.

It catalyses the reaction IMP + NH4(+) + NADP(+) = GMP + NADPH + 2 H(+). In terms of biological role, catalyzes the irreversible NADPH-dependent deamination of GMP to IMP. It functions in the conversion of nucleobase, nucleoside and nucleotide derivatives of G to A nucleotides, and in maintaining the intracellular balance of A and G nucleotides. In Salmonella choleraesuis (strain SC-B67), this protein is GMP reductase.